A 206-amino-acid chain; its full sequence is Sclerostin domain-containing protein 1 (206 aa).

Residues 1–22 (MLLSAIHFYGLLLACTFTRSYS) form the signal peptide. The interval 40–68 (APASPSSNSTLNQARNGGRHYAGTGSDRN) is disordered. Over residues 43-54 (SPSSNSTLNQAR) the composition is skewed to polar residues. N-linked (GlcNAc...) asparagine glycosylation is present at asparagine 47. Intrachain disulfides connect cysteine 75-cysteine 133, cysteine 89-cysteine 147, cysteine 100-cysteine 163, and cysteine 104-cysteine 165. A CTCK domain is found at 75 to 170 (CRELRSTKYI…TACKCKRYTR (96 aa)). A glycan (N-linked (GlcNAc...) asparagine) is linked at asparagine 173. The tract at residues 176 to 206 (SHNFEGTSQAKPVQHHKERKRASKSSKHSTS) is disordered. Residues 188–206 (VQHHKERKRASKSSKHSTS) show a composition bias toward basic residues.

The protein belongs to the sclerostin family. As to quaternary structure, interacts with LRP6.

Its subcellular location is the secreted. Functionally, can activate or inhibit Wnt signaling in a context-dependent manner. Activates the canonical Wnt pathway whereby acts through Disheveled proteins and beta-catenin. Antagonises Wnt signaling through the canonical pathways presumably by blocking accessibility of certain WNTs to their receptors. Induces posterior neural markers via components of the canonical Wnt pathway. The protein is Sclerostin domain-containing protein 1 (SOSTDC1) of Gallus gallus (Chicken).